Consider the following 175-residue polypeptide: Probable DNA replication complex GINS protein PSF2 (175 aa).

It belongs to the GINS2/PSF2 family. As to quaternary structure, component of the GINS complex which is a heterotetramer of SLD5, PSF1, PSF2 and PSF3.

It is found in the nucleus. In terms of biological role, the GINS complex plays an essential role in the initiation of DNA replication. The polypeptide is Probable DNA replication complex GINS protein PSF2 (Encephalitozoon cuniculi (strain GB-M1) (Microsporidian parasite)).